Here is a 177-residue protein sequence, read N- to C-terminus: MGVTVDVHQVFQYPFEQVVACFLRKYPNPMDKNVISVKTVEEKKDESTGLIYRKRIAICQNVVPEILRKVSILKVPDIQLEEESWLSLQKRNMAIRSHCLTWTQYASMREESVFRESVENPNWTEFIQTGRISITGAGFLNCILETFASTFLRQGAQKGIRIMEMLLKEQCGSPLVE.

The PRELI/MSF1 domain occupies Met1 to Leu175.

The polypeptide is PRELI domain-containing protein 2 (Prelid2) (Mus musculus (Mouse)).